We begin with the raw amino-acid sequence, 107 residues long: Sperm-specific class P protein 31 (107 aa).

In terms of domain architecture, MSP spans 1 to 107; the sequence is MINIDPPSGD…GEVVVKMVAS (107 aa).

As to expression, expressed at higher level in testis.

The protein is Sperm-specific class P protein 31 (ssp-31) of Caenorhabditis elegans.